An 89-amino-acid chain; its full sequence is UPF0367 protein CYA_1023 (89 aa).

Positions 69–89 (TKSGGPGAPGTRPGFLAQLQG) are disordered.

This sequence belongs to the UPF0367 family.

This chain is UPF0367 protein CYA_1023, found in Synechococcus sp. (strain JA-3-3Ab) (Cyanobacteria bacterium Yellowstone A-Prime).